Here is a 512-residue protein sequence, read N- to C-terminus: ATP synthase subunit alpha 1 (512 aa).

169-176 (GDRQTGKT) provides a ligand contact to ATP.

This sequence belongs to the ATPase alpha/beta chains family. As to quaternary structure, F-type ATPases have 2 components, CF(1) - the catalytic core - and CF(0) - the membrane proton channel. CF(1) has five subunits: alpha(3), beta(3), gamma(1), delta(1), epsilon(1). CF(0) has four main subunits: a(1), b(1), b'(1) and c(9-12).

It localises to the cell inner membrane. The catalysed reaction is ATP + H2O + 4 H(+)(in) = ADP + phosphate + 5 H(+)(out). Its function is as follows. Produces ATP from ADP in the presence of a proton gradient across the membrane. The alpha chain is a regulatory subunit. In Cereibacter sphaeroides (strain ATCC 17029 / ATH 2.4.9) (Rhodobacter sphaeroides), this protein is ATP synthase subunit alpha 1.